Reading from the N-terminus, the 1510-residue chain is ABC transporter C family MRP4 (1510 aa).

Transmembrane regions (helical) follow at residues Glu12–Leu32, Pro55–Trp75, Ala78–Val98, Ala109–Gln129, Phe138–Tyr158, Met177–Gly197, Thr319–Val339, Leu342–Ala362, Trp373–Tyr393, Ala427–Leu447, Ile453–Ala473, and Phe540–Leu560. Positions Phe320–Gln595 constitute an ABC transmembrane type-1 1 domain. Residues Val629–Ala852 form the ABC transporter 1 domain. An ATP-binding site is contributed by Gly664–Ser671. Residues Leu889 to Arg925 are disordered. Residues Lys906–Arg918 are compositionally biased toward basic residues. The next 6 membrane-spanning stretches (helical) occupy residues Gly945–Ser965, Ser985–Met1005, Ile1060–Ser1082, Trp1086–Ala1108, Leu1154–Leu1174, and Leu1179–Ile1199. Residues Leu950–Arg1220 form the ABC transmembrane type-1 2 domain. The ABC transporter 2 domain maps to Ile1267–Ser1501. Residue Gly1301–Ser1308 coordinates ATP.

Belongs to the ABC transporter superfamily. ABCC family. Conjugate transporter (TC 3.A.1.208) subfamily. As to expression, expressed in roots, leaves, stalks, tassels, silks, developing seeds and developing embryos.

The protein localises to the membrane. In terms of biological role, ABC transporter that may affect phytic acid transport and compartmentalization. May function directly or indirectly in removing phytic acid from the cytosol or in vesicle trafficking. Required for phytic acid accumulation in developing seeds. Phytic acid is the primary storage form of phosphorus in cereal grains and other plant seeds. This Zea mays (Maize) protein is ABC transporter C family MRP4.